Consider the following 1212-residue polypeptide: Solute carrier family 12 member 2 (1212 aa).

An N-acetylmethionine modification is found at M1. Residues 1-286 are Cytoplasmic-facing; sequence MEPRPTAPSS…AESKGVVKFG (286 aa). 3 disordered regions span residues 36–81, 112–138, and 150–193; these read GTAV…QSRF, GAKQTPADGEASGESEPAKGSEEAKGR, and SSAE…GGGS. S77 and S79 each carry phosphoserine. The RFXV motif 1 motif lies at 80-83; sequence RFQV. Basic and acidic residues predominate over residues 127-137; sequence EPAKGSEEAKG. Residues 138-141 carry the RFXV motif 2 motif; the sequence is RFRV. The segment covering 150–160 has biased composition (low complexity); the sequence is SSAEDSLSDAA. Residues T203, T207, and T212 each carry the phosphothreonine; by OXSR1 and STK39 modification. 2 positions are modified to phosphothreonine: T217 and T230. Residue S242 is modified to Phosphoserine. Residue T266 is modified to Phosphothreonine. Residues 287–316 form a discontinuously helical membrane-spanning segment; the sequence is WIKGVLVRCMLNIWGVMLFIRLSWIVGQAG. Na(+) is bound at residue L297. 2 residues coordinate K(+): N298 and I299. Na(+) is bound at residue W300. Chloride contacts are provided by G301, V302, and M303. Residues 317–336 traverse the membrane as a helical segment; sequence IGLSVLVIMMATVVTTITGL. Over 337–367 the chain is Cytoplasmic; it reads STSAIATNGFVRGGGAYYLISRSLGPEFGGA. Residues 368–395 form a helical membrane-spanning segment; it reads IGLIFAFANAVAVAMYVVGFAETVVELL. Residue F372 participates in chloride binding. K(+) is bound at residue Y383. Residues 396–405 are Extracellular-facing; sequence KEHSILMIDE. Residues 406 to 429 form a helical membrane-spanning segment; the sequence is INDIRIIGAITVVILLGISVAGME. Over 430–432 the chain is Cytoplasmic; the sequence is WEA. The chain crosses the membrane as a helical span at residues 433–454; it reads KAQIVLLVILLLAIGDFVIGTF. Residues 455–486 are Extracellular-facing; sequence IPLESKKPKGFFGYKSEIFNENFGPDFREEET. The discontinuously helical transmembrane segment at 487–504 threads the bilayer; sequence FFSVFAIFFPAATGILAG. K(+) contacts are provided by P496, A497, and T499. Residues P496 and A497 each contribute to the chloride site. Residues G500 and I501 each coordinate chloride. Over 505–519 the chain is Cytoplasmic; it reads ANISGDLADPQSAIP. Residues 520-541 form a helical membrane-spanning segment; it reads KGTLLAILITTLVYVGIAVSVG. Topologically, residues 542–598 are extracellular; that stretch reads SCVVRDATGNVNDTIVTELTNCTSAACKLNFDFSSCESSPCSYGLMNNFQVMSMVSG. N-linked (GlcNAc...) asparagine glycosylation is found at N553 and N562. Cystine bridges form between C563/C568 and C577/C582. Residues 599–623 form a helical membrane-spanning segment; that stretch reads FTPLISAGIFSATLSSALASLVSAP. Na(+)-binding residues include A610, S613, and S614. Over 624–651 the chain is Cytoplasmic; the sequence is KIFQALCKDNIYPAFQMFAKGYGKNNEP. A run of 2 helical transmembrane segments spans residues 652 to 672 and 673 to 691; these read LRGYILTFLIALGFILIAELN and VIAPIISNFFLASYALINF. Chloride contacts are provided by F682 and Y686. Residues 692–714 lie on the Cytoplasmic side of the membrane; sequence SVFHASLAKSPGWRPAFKYYNMW. 2 consecutive transmembrane segments (helical) span residues 715 to 732 and 733 to 745; these read ISLLGAILCCIVMFVINW and WAALLTYVIVLGL. Residues 746–1212 lie on the Cytoplasmic side of the membrane; the sequence is YIYVTYKKPD…NHQSVLTFYS (467 aa). Residues 761–778 form a scissor helix region; sequence STQALTYLNALQHSIRLS. A phosphoserine mark is found at S940 and S944. Residues 962–978 show a composition bias toward basic and acidic residues; it reads LDTSKPLSEKPITHKVE. The interval 962 to 989 is disordered; that stretch reads LDTSKPLSEKPITHKVEEEDGKTATQPL. A Phosphoserine modification is found at S994.

The protein belongs to the SLC12A transporter family. Homodimer; adopts a domain-swap conformation at the scissor helices connecting the transmembrane domain and C-terminal domain. Phosphorylated at Thr-203, Thr-207 and Thr-212 by OXSR1/OSR1 and STK39/SPAK downstream of WNK kinases (WNK1, WNK2, WNK3 or WNK4), promoting its activity. In terms of tissue distribution, expressed in many tissues.

The protein resides in the basolateral cell membrane. It catalyses the reaction K(+)(out) + 2 chloride(out) + Na(+)(out) = K(+)(in) + 2 chloride(in) + Na(+)(in). Activated following phosphorylation by OXSR1/OSR1 and STK39/SPAK downstream of WNK kinases (WNK1, WNK2, WNK3 or WNK4). Inhibited by bumetanide. Inhibited by furosemide. In terms of biological role, cation-chloride cotransporter which mediates the electroneutral transport of chloride, potassium and/or sodium ions across the membrane. Plays a vital role in the regulation of ionic balance and cell volume. The sequence is that of Solute carrier family 12 member 2 (SLC12A2) from Homo sapiens (Human).